We begin with the raw amino-acid sequence, 99 residues long: Malonate decarboxylase acyl carrier protein (99 aa).

Residue Ser-25 is modified to O-(phosphoribosyl dephospho-coenzyme A)serine.

The protein belongs to the MdcC family. In terms of processing, covalently binds the prosthetic group of malonate decarboxylase.

It is found in the cytoplasm. In terms of biological role, subunit of malonate decarboxylase, it is an acyl carrier protein to which acetyl and malonyl thioester residues are bound via a 2'-(5''-phosphoribosyl)-3'-dephospho-CoA prosthetic group and turn over during the catalytic mechanism. This chain is Malonate decarboxylase acyl carrier protein, found in Pseudomonas fluorescens (strain ATCC BAA-477 / NRRL B-23932 / Pf-5).